The chain runs to 474 residues: L-arabinose isomerase 2 (474 aa).

4 residues coordinate Mn(2+): Glu306, Glu331, His348, and His447.

The protein belongs to the arabinose isomerase family. It depends on Mn(2+) as a cofactor.

The catalysed reaction is beta-L-arabinopyranose = L-ribulose. It participates in carbohydrate degradation; L-arabinose degradation via L-ribulose; D-xylulose 5-phosphate from L-arabinose (bacterial route): step 1/3. Its function is as follows. Catalyzes the conversion of L-arabinose to L-ribulose. This chain is L-arabinose isomerase 2, found in Bacillus licheniformis (strain ATCC 14580 / DSM 13 / JCM 2505 / CCUG 7422 / NBRC 12200 / NCIMB 9375 / NCTC 10341 / NRRL NRS-1264 / Gibson 46).